Consider the following 380-residue polypeptide: PqqA peptide cyclase (380 aa).

Residues 8-223 (VNPPLWLLAE…VADYRQKMAA (216 aa)) enclose the Radical SAM core domain. Cys22, Cys26, and Cys29 together coordinate [4Fe-4S] cluster.

The protein belongs to the radical SAM superfamily. PqqE family. As to quaternary structure, interacts with PqqD. The interaction is necessary for activity of PqqE. [4Fe-4S] cluster serves as cofactor.

It catalyses the reaction [PQQ precursor protein] + S-adenosyl-L-methionine = E-Y cross-linked-[PQQ precursor protein] + 5'-deoxyadenosine + L-methionine + H(+). Its pathway is cofactor biosynthesis; pyrroloquinoline quinone biosynthesis. Its function is as follows. Catalyzes the cross-linking of a glutamate residue and a tyrosine residue in the PqqA protein as part of the biosynthesis of pyrroloquinoline quinone (PQQ). In Klebsiella pneumoniae (strain 342), this protein is PqqA peptide cyclase.